The primary structure comprises 83 residues: MSTLRELRLRRALKEQSMKYRLSIKKTLPRWKGALIGLFLICVRTISGSGSESNLPEPPKVSVDSSLMIEPNLTTEMLNVFSQ.

Positions 1–50 are cleaved as a signal peptide; it reads MSTLRELRLRRALKEQSMKYRLSIKKTLPRWKGALIGLFLICVRTISGSG.

The protein belongs to the T7likevirus o-spanin family. Homodimer. Interacts (via C-terminus) with the spanin inner membrane subunit (via C-terminus). Part of the spanin complex which spans the entire periplasmic space. The spanin complex is composed of spanin inner membrane subunit and spanin outer membrane subunit.

The protein localises to the host cell outer membrane. Its function is as follows. Component of the spanin complex that disrupts the host outer membrane and participates in cell lysis during virus exit. The spanin complex conducts the final step in host lysis by disrupting the outer membrane after holin and endolysin action have permeabilized the inner membrane and degraded the host peptidoglycans. Host outer membrane disruption is possibly due to local fusion between the inner and outer membrane performed by the spanin complex. The chain is Spanin, outer lipoprotein subunit (18.7) from Escherichia coli (Bacteriophage T3).